Here is a 92-residue protein sequence, read N- to C-terminus: Small nuclear ribonucleoprotein E (92 aa).

A Sm domain is found at 18–92 (INLIFRYLQN…NITLLQSVSN (75 aa)).

This sequence belongs to the snRNP Sm proteins family. As to quaternary structure, core component of the spliceosomal U1, U2, U4 and U5 small nuclear ribonucleoproteins (snRNPs), the building blocks of the spliceosome. Most spliceosomal snRNPs contain a common set of Sm proteins, SNRPB, SNRPD1, SNRPD2, SNRPD3, SNRPE, SNRPF and SNRPG that assemble in a heptameric protein ring on the Sm site of the small nuclear RNA to form the core snRNP. Component of the U1 snRNP. The U1 snRNP is composed of the U1 snRNA and the 7 core Sm proteins SNRPB, SNRPD1, SNRPD2, SNRPD3, SNRPE, SNRPF and SNRPG, and at least three U1 snRNP-specific proteins SNRNP70/U1-70K, SNRPA/U1-A and SNRPC/U1-C. Component of the U4/U6-U5 tri-snRNP complex composed of the U4, U6 and U5 snRNAs and at least PRPF3, PRPF4, PRPF6, PRPF8, PRPF31, SNRNP200, TXNL4A, SNRNP40, SNRPB, SNRPD1, SNRPD2, SNRPD3, SNRPE, SNRPF, SNRPG, DDX23, CD2BP2, PPIH, SNU13, EFTUD2, SART1 and USP39, plus LSM2, LSM3, LSM4, LSM5, LSM6, LSM7 and LSM8. Component of the U7 snRNP complex, or U7 Sm protein core complex, that is composed of the U7 snRNA and at least LSM10, LSM11, SNRPB, SNRPD3, SNRPE, SNRPF and SNRPG; the complex does not contain SNRPD1 and SNRPD2. Component of the minor spliceosome, which splices U12-type introns. Part of the SMN-Sm complex that contains SMN1, GEMIN2/SIP1, DDX20/GEMIN3, GEMIN4, GEMIN5, GEMIN6, GEMIN7, GEMIN8, STRAP/UNRIP and the Sm proteins SNRPB, SNRPD1, SNRPD2, SNRPD3, SNRPE, SNRPF and SNRPG; catalyzes core snRNPs assembly. Forms a 6S pICln-Sm complex composed of CLNS1A/pICln, SNRPD1, SNRPD2, SNRPE, SNRPF and SNRPG; ring-like structure where CLNS1A/pICln mimics additional Sm proteins and which is unable to assemble into the core snRNP. Interacts with SMN1; the interaction is direct. Interacts with GEMIN2 (via N-terminus); the interaction is direct. Interacts with SNRPF; the interaction is direct. Interacts with SNRPG; the interaction is direct.

It localises to the cytoplasm. The protein localises to the cytosol. The protein resides in the nucleus. In terms of biological role, plays a role in pre-mRNA splicing as a core component of the spliceosomal U1, U2, U4 and U5 small nuclear ribonucleoproteins (snRNPs), the building blocks of the spliceosome. Component of both the pre-catalytic spliceosome B complex and activated spliceosome C complexes. As a component of the minor spliceosome, involved in the splicing of U12-type introns in pre-mRNAs. As part of the U7 snRNP it is involved in histone 3'-end processing. This is Small nuclear ribonucleoprotein E (SNRPE) from Bos taurus (Bovine).